A 92-amino-acid chain; its full sequence is Kinetoplastid membrane protein 11B (92 aa).

Belongs to the KMP-11 family. Monomer.

It localises to the cytoplasm. It is found in the cytoskeleton. The protein resides in the cell projection. The protein localises to the cilium. Its subcellular location is the flagellum. May be involved in the regulation of the cytoskeleton through interaction with the subpellicular microtubules. May be involved in parasite mobility and attachment to the surface of the host cell. Behaves as a strong immunogen during infection. The protein is Kinetoplastid membrane protein 11B (KMP-11B) of Leishmania infantum.